The following is an 88-amino-acid chain: MLCAIYKSKKKLGSYLYVANREDFSLVPSVLLEHFGKPELVMMFNLLGRKALYNVDCNEVLETIKRQGFYLQIAKQDDGLFNSLSEIK.

The YcgL domain occupies 1–85; that stretch reads MLCAIYKSKK…QDDGLFNSLS (85 aa).

The protein is YcgL domain-containing protein NTHI1684 of Haemophilus influenzae (strain 86-028NP).